The sequence spans 874 residues: Alanine--tRNA ligase (874 aa).

Zn(2+) contacts are provided by H562, H566, C664, and H668.

It belongs to the class-II aminoacyl-tRNA synthetase family. Zn(2+) is required as a cofactor.

The protein localises to the cytoplasm. The enzyme catalyses tRNA(Ala) + L-alanine + ATP = L-alanyl-tRNA(Ala) + AMP + diphosphate. Functionally, catalyzes the attachment of alanine to tRNA(Ala) in a two-step reaction: alanine is first activated by ATP to form Ala-AMP and then transferred to the acceptor end of tRNA(Ala). Also edits incorrectly charged Ser-tRNA(Ala) and Gly-tRNA(Ala) via its editing domain. The chain is Alanine--tRNA ligase from Shewanella halifaxensis (strain HAW-EB4).